We begin with the raw amino-acid sequence, 1392 residues long: DNA-directed RNA polymerase subunit beta'' (1392 aa).

Residues Cys-224, Cys-295, Cys-302, and Cys-305 each contribute to the Zn(2+) site.

This sequence belongs to the RNA polymerase beta' chain family. RpoC2 subfamily. In terms of assembly, in plastids the minimal PEP RNA polymerase catalytic core is composed of four subunits: alpha, beta, beta', and beta''. When a (nuclear-encoded) sigma factor is associated with the core the holoenzyme is formed, which can initiate transcription. Requires Zn(2+) as cofactor.

It is found in the plastid. It localises to the chloroplast. The catalysed reaction is RNA(n) + a ribonucleoside 5'-triphosphate = RNA(n+1) + diphosphate. Functionally, DNA-dependent RNA polymerase catalyzes the transcription of DNA into RNA using the four ribonucleoside triphosphates as substrates. In Solanum bulbocastanum (Wild potato), this protein is DNA-directed RNA polymerase subunit beta''.